The following is a 681-amino-acid chain: NADH-quinone oxidoreductase subunit G (681 aa).

Positions 1–78 (MIKLTIDGQE…GMVIHTDTPM (78 aa)) constitute a 2Fe-2S ferredoxin-type domain. Residues Cys-34, Cys-45, Cys-48, and Cys-62 each contribute to the [2Fe-2S] cluster site. The 40-residue stretch at 78–117 (MVKKAREGVMEFLLVNHPLDCPICDQGGECDLQDQAFRYG) folds into the 4Fe-4S His(Cys)3-ligated-type domain. Residues His-94, Cys-98, Cys-101, Cys-107, Cys-146, Cys-149, Cys-152, and Cys-196 each coordinate [4Fe-4S] cluster. One can recognise a 4Fe-4S Mo/W bis-MGD-type domain in the interval 215 to 271 (LRHTASIGVHDAEGSNIRIDSRGDEVMRVLPRVNEEINEEWLSDKNRFSYDGLKYQR).

The protein belongs to the complex I 75 kDa subunit family. [2Fe-2S] cluster is required as a cofactor. [4Fe-4S] cluster serves as cofactor.

The enzyme catalyses a quinone + NADH + 5 H(+)(in) = a quinol + NAD(+) + 4 H(+)(out). NDH-1 shuttles electrons from NADH, via FMN and iron-sulfur (Fe-S) centers, to quinones in the respiratory chain. Couples the redox reaction to proton translocation (for every two electrons transferred, four hydrogen ions are translocated across the cytoplasmic membrane), and thus conserves the redox energy in a proton gradient. This Rickettsia bellii (strain RML369-C) protein is NADH-quinone oxidoreductase subunit G (nuoG).